A 335-amino-acid chain; its full sequence is Replication factor C subunit 4 (335 aa).

Residue 56–63 coordinates ATP; it reads SGPPGTGK.

It belongs to the activator 1 small subunits family. As to quaternary structure, heterotetramer of subunits RFC2, RFC3, RFC4 and RFC5 that can form a complex with RFC1. As to expression, expressed in roots, leaves, shoot apical meristem (SAM), flag leaves and panicles.

The protein localises to the nucleus. May be involved in DNA replication and thus regulate cell proliferation. The sequence is that of Replication factor C subunit 4 (RFC4) from Oryza sativa subsp. japonica (Rice).